The following is a 426-amino-acid chain: Phosphomethylpyrimidine synthase (426 aa).

Residues N65, M94, Y123, H162, 184–186 (SRG), 225–228 (DGMR), and E264 each bind substrate. Zn(2+) is bound at residue H268. Substrate is bound at residue Y291. Residue H332 coordinates Zn(2+). [4Fe-4S] cluster-binding residues include C408, C411, and C415.

Belongs to the ThiC family. [4Fe-4S] cluster serves as cofactor.

It catalyses the reaction 5-amino-1-(5-phospho-beta-D-ribosyl)imidazole + S-adenosyl-L-methionine = 4-amino-2-methyl-5-(phosphooxymethyl)pyrimidine + CO + 5'-deoxyadenosine + formate + L-methionine + 3 H(+). The protein operates within cofactor biosynthesis; thiamine diphosphate biosynthesis. Its function is as follows. Catalyzes the synthesis of the hydroxymethylpyrimidine phosphate (HMP-P) moiety of thiamine from aminoimidazole ribotide (AIR) in a radical S-adenosyl-L-methionine (SAM)-dependent reaction. This chain is Phosphomethylpyrimidine synthase, found in Methanococcus aeolicus (strain ATCC BAA-1280 / DSM 17508 / OCM 812 / Nankai-3).